Consider the following 444-residue polypeptide: Alanyl-tRNA editing protein Aarsd1 (444 aa).

Residues His-109 and His-113 each coordinate Zn(2+). Ser-174 is subject to Phosphoserine. Residues Cys-209 and His-213 each coordinate Zn(2+).

It belongs to the class-II aminoacyl-tRNA synthetase family. Alax-L subfamily. The cofactor is Zn(2+).

Its subcellular location is the cytoplasm. Functionally, functions in trans to edit the amino acid moiety from incorrectly charged tRNA(Ala). The sequence is that of Alanyl-tRNA editing protein Aarsd1 (AARSD1) from Bos taurus (Bovine).